The primary structure comprises 248 residues: Ureidoacrylate amidohydrolase RutB (248 aa).

Residue Asp-41 is the Proton acceptor of the active site. Lys-150 is an active-site residue. Catalysis depends on Cys-183, which acts as the Nucleophile.

It belongs to the isochorismatase family. RutB subfamily.

The catalysed reaction is (Z)-3-ureidoacrylate + H2O + H(+) = (Z)-3-aminoacrylate + NH4(+) + CO2. It carries out the reaction (Z)-3-ureidoacrylate + H2O = (Z)-3-aminoacrylate + carbamate + H(+). It catalyses the reaction (Z)-2-methylureidoacrylate + H2O + H(+) = (Z)-2-methylaminoacrylate + NH4(+) + CO2. Its function is as follows. Hydrolyzes ureidoacrylate to form aminoacrylate and carbamate. The carbamate hydrolyzes spontaneously, thereby releasing one of the nitrogen atoms of the pyrimidine ring as ammonia and one of its carbon atoms as CO2. The chain is Ureidoacrylate amidohydrolase RutB from Methylorubrum extorquens (strain ATCC 14718 / DSM 1338 / JCM 2805 / NCIMB 9133 / AM1) (Methylobacterium extorquens).